The chain runs to 499 residues: Ribose import ATP-binding protein RbsA 1 (499 aa).

ABC transporter domains are found at residues L5–I240 and T249–S494. An ATP-binding site is contributed by G37–S44.

Belongs to the ABC transporter superfamily. Ribose importer (TC 3.A.1.2.1) family. As to quaternary structure, the complex is composed of an ATP-binding protein (RbsA), two transmembrane proteins (RbsC) and a solute-binding protein (RbsB).

The protein resides in the cell membrane. The catalysed reaction is D-ribose(out) + ATP + H2O = D-ribose(in) + ADP + phosphate + H(+). Part of the ABC transporter complex RbsABC involved in ribose import. Responsible for energy coupling to the transport system. This is Ribose import ATP-binding protein RbsA 1 from Rubrobacter xylanophilus (strain DSM 9941 / JCM 11954 / NBRC 16129 / PRD-1).